Consider the following 238-residue polypeptide: Sugar fermentation stimulation protein homolog (238 aa).

It belongs to the SfsA family.

The protein is Sugar fermentation stimulation protein homolog of Haemophilus influenzae (strain ATCC 51907 / DSM 11121 / KW20 / Rd).